Here is a 477-residue protein sequence, read N- to C-terminus: Glutamyl-tRNA(Gln) amidotransferase subunit A (477 aa).

Active-site charge relay system residues include Lys-76 and Ser-151. Ser-175 functions as the Acyl-ester intermediate in the catalytic mechanism.

Belongs to the amidase family. GatA subfamily. As to quaternary structure, heterotrimer of A, B and C subunits.

The catalysed reaction is L-glutamyl-tRNA(Gln) + L-glutamine + ATP + H2O = L-glutaminyl-tRNA(Gln) + L-glutamate + ADP + phosphate + H(+). Allows the formation of correctly charged Gln-tRNA(Gln) through the transamidation of misacylated Glu-tRNA(Gln) in organisms which lack glutaminyl-tRNA synthetase. The reaction takes place in the presence of glutamine and ATP through an activated gamma-phospho-Glu-tRNA(Gln). This chain is Glutamyl-tRNA(Gln) amidotransferase subunit A, found in Prosthecochloris aestuarii (strain DSM 271 / SK 413).